Here is a 125-residue protein sequence, read N- to C-terminus: Small ribosomal subunit protein eS6 (125 aa).

The interval 90–109 (KGPGFRPKEKGERRKKTVRG) is disordered.

Belongs to the eukaryotic ribosomal protein eS6 family. In terms of assembly, part of the 30S ribosomal subunit.

In Pyrococcus furiosus (strain ATCC 43587 / DSM 3638 / JCM 8422 / Vc1), this protein is Small ribosomal subunit protein eS6.